A 77-amino-acid polypeptide reads, in one-letter code: Large ribosomal subunit protein bL28 (77 aa).

Belongs to the bacterial ribosomal protein bL28 family.

This chain is Large ribosomal subunit protein bL28, found in Delftia acidovorans (strain DSM 14801 / SPH-1).